A 228-amino-acid chain; its full sequence is MCADHGISSVLSLMQLVSSNFPVGSFAYSRGLEWAVENNWVNSVETFYSWQQQWIDGPLIYLEWPMLKRCYYYAQIRDEMNFFQCALRILSYRDTHELRLEERQRGKALSRIILQWYPFTDGGTWLSALEHSGLASIAWLGYTWSISLENLALGYAYNMLESATMAGLKLVPFGQITAQRLLRSLMERLPNDWKKSDMIADHELGNGFLLQSIASSCHETQYSRLFRS.

This sequence belongs to the UreF family. UreD, UreF and UreG form a complex that acts as a GTP-hydrolysis-dependent molecular chaperone, activating the urease apoprotein by helping to assemble the nickel containing metallocenter of UreC. The UreE protein probably delivers the nickel.

It localises to the cytoplasm. Functionally, required for maturation of urease via the functional incorporation of the urease nickel metallocenter. This chain is Urease accessory protein UreF, found in Blochmanniella pennsylvanica (strain BPEN).